We begin with the raw amino-acid sequence, 445 residues long: Phosphoglucosamine mutase (445 aa).

Ser99 (phosphoserine intermediate) is an active-site residue. Mg(2+) contacts are provided by Ser99, Asp242, Asp244, and Asp246. Ser99 is modified (phosphoserine).

It belongs to the phosphohexose mutase family. The cofactor is Mg(2+). Activated by phosphorylation.

The enzyme catalyses alpha-D-glucosamine 1-phosphate = D-glucosamine 6-phosphate. Functionally, catalyzes the conversion of glucosamine-6-phosphate to glucosamine-1-phosphate. In Campylobacter jejuni subsp. jejuni serotype O:6 (strain 81116 / NCTC 11828), this protein is Phosphoglucosamine mutase.